The sequence spans 1238 residues: Protein translocase subunit SecA 1 (1238 aa).

ATP contacts are provided by residues Q107, 125–129 (GEGKT), and D570. The disordered stretch occupies residues 1194–1220 (AAGSEGRAEGSVDTVRVEEPRIGRNAP). Over residues 1199–1215 (GRAEGSVDTVRVEEPRI) the composition is skewed to basic and acidic residues. 4 residues coordinate Zn(2+): C1221, C1223, C1232, and C1233.

This sequence belongs to the SecA family. As to quaternary structure, monomer and homodimer. Part of the essential Sec protein translocation apparatus which comprises SecA, SecYEG and auxiliary proteins SecDF. Other proteins may also be involved. The cofactor is Zn(2+).

It is found in the cell inner membrane. The protein localises to the cytoplasm. It carries out the reaction ATP + H2O + cellular proteinSide 1 = ADP + phosphate + cellular proteinSide 2.. Part of the Sec protein translocase complex. Interacts with the SecYEG preprotein conducting channel. Has a central role in coupling the hydrolysis of ATP to the transfer of proteins into and across the cell membrane, serving as an ATP-driven molecular motor driving the stepwise translocation of polypeptide chains across the membrane. This chain is Protein translocase subunit SecA 1, found in Rhodopirellula baltica (strain DSM 10527 / NCIMB 13988 / SH1).